The following is a 189-amino-acid chain: ATP synthase subunit delta (189 aa).

It belongs to the ATPase delta chain family. As to quaternary structure, F-type ATPases have 2 components, F(1) - the catalytic core - and F(0) - the membrane proton channel. F(1) has five subunits: alpha(3), beta(3), gamma(1), delta(1), epsilon(1). F(0) has three main subunits: a(1), b(2) and c(10-14). The alpha and beta chains form an alternating ring which encloses part of the gamma chain. F(1) is attached to F(0) by a central stalk formed by the gamma and epsilon chains, while a peripheral stalk is formed by the delta and b chains.

It localises to the cell inner membrane. In terms of biological role, f(1)F(0) ATP synthase produces ATP from ADP in the presence of a proton or sodium gradient. F-type ATPases consist of two structural domains, F(1) containing the extramembraneous catalytic core and F(0) containing the membrane proton channel, linked together by a central stalk and a peripheral stalk. During catalysis, ATP synthesis in the catalytic domain of F(1) is coupled via a rotary mechanism of the central stalk subunits to proton translocation. This protein is part of the stalk that links CF(0) to CF(1). It either transmits conformational changes from CF(0) to CF(1) or is implicated in proton conduction. This Methylorubrum extorquens (strain CM4 / NCIMB 13688) (Methylobacterium extorquens) protein is ATP synthase subunit delta.